Here is a 324-residue protein sequence, read N- to C-terminus: Putative transcription factor sel-7 (324 aa).

The segment covering 67–85 has biased composition (polar residues); that stretch reads SPPQTVISEAPPQSFTPSA. The tract at residues 67–151 is disordered; sequence SPPQTVISEA…DEKVLADGPF (85 aa). The span at 86–98 shows a compositional bias: low complexity; it reads TNSTSDKTSSSLK. Over residues 106 to 123 the composition is skewed to acidic residues; it reads SDGDLDMEGEEDTEELFD. Positions 124–133 are enriched in polar residues; that stretch reads NESQPSQRNQ. A compositionally biased stretch (basic and acidic residues) spans 134-146; it reads SPKETEVEDEKVL.

In terms of assembly, multimer. May interact with mediator complex subunit mdt-29. As to expression, widely expressed, including in pharyngeal muscle cells and body wall muscle cells.

The protein localises to the nucleus. In terms of biological role, putative transcription factor. Positive regulator of the lin-12/Notch signaling pathway. Binds to specific DNA sequences in regulatory elements. Involved in cell fate decisions that require cell-cell interactions, such as the anchor cell (AC) / ventral uterine (VU) precursor cell fate decision. Heterochronic protein which controls the choice of stage specific cell fates, including the larval L3 stage-specific fate of seam cells. Involved in regulating the temporal expression pattern of hunchback-like protein hbl-1, thereby playing a role in the progression between larval stages L2 and L3. The sequence is that of Putative transcription factor sel-7 from Caenorhabditis elegans.